We begin with the raw amino-acid sequence, 232 residues long: Sugar fermentation stimulation protein homolog (232 aa).

Belongs to the SfsA family.

In Pelagibacter ubique (strain HTCC1062), this protein is Sugar fermentation stimulation protein homolog.